A 456-amino-acid polypeptide reads, in one-letter code: Anthranilate synthase component 1 (456 aa).

L-tryptophan contacts are provided by residues S31 and 244 to 246 (SYM). Residue 279–280 (GT) participates in chorismate binding. E306 serves as a coordination point for Mg(2+). Residues Y394, R414, 428-430 (GAG), and G430 contribute to the chorismate site. Residue E443 participates in Mg(2+) binding.

This sequence belongs to the anthranilate synthase component I family. As to quaternary structure, heterotetramer consisting of two non-identical subunits: a beta subunit (TrpG) and a large alpha subunit (TrpE). The cofactor is Mg(2+).

It catalyses the reaction chorismate + L-glutamine = anthranilate + pyruvate + L-glutamate + H(+). It functions in the pathway amino-acid biosynthesis; L-tryptophan biosynthesis; L-tryptophan from chorismate: step 1/5. With respect to regulation, feedback inhibited by tryptophan. Functionally, part of a heterotetrameric complex that catalyzes the two-step biosynthesis of anthranilate, an intermediate in the biosynthesis of L-tryptophan. In the first step, the glutamine-binding beta subunit (TrpG) of anthranilate synthase (AS) provides the glutamine amidotransferase activity which generates ammonia as a substrate that, along with chorismate, is used in the second step, catalyzed by the large alpha subunit of AS (TrpE) to produce anthranilate. In the absence of TrpG, TrpE can synthesize anthranilate directly from chorismate and high concentrations of ammonia. The polypeptide is Anthranilate synthase component 1 (trpE) (Lactococcus lactis subsp. lactis (strain IL1403) (Streptococcus lactis)).